The primary structure comprises 273 residues: SPRY domain-containing SOCS box protein 1 (273 aa).

Tyrosine 31 bears the Phosphotyrosine; by MET mark. One can recognise a B30.2/SPRY domain in the interval 33 to 231 (KPTRLDLLLD…IRMRYLNGLD (199 aa)). An SOCS box domain is found at 232 to 273 (PEPLPLMDLCRRSVRLALGRERLGEIHTLPLPASLKAYLLYQ).

The protein belongs to the SPSB family. Component of the probable ECS(SPSB1) E3 ubiquitin-protein ligase complex which contains CUL5, RNF7/RBX2, Elongin BC complex and SPSB1. Interacts with CUL5, RNF7, ELOB and ELOC. Directly interacts with MET tyrosine kinase domain in the presence and in the absence of HGF, however HGF treatment has a positive effect on this interaction. When phosphorylated, interacts with RASA1 without affecting its stability. Interacts (via B30.2/SPRY domain) with PAWR; this interaction is direct and occurs in association with the Elongin BC complex. Interacts with NOS2. Interacts with EPHB2.

It is found in the cytoplasm. Its subcellular location is the cytosol. Its pathway is protein modification; protein ubiquitination. Substrate recognition component of a SCF-like ECS (Elongin BC-CUL2/5-SOCS-box protein) E3 ubiquitin-protein ligase complex which mediates the ubiquitination and subsequent proteasomal degradation of target proteins. Negatively regulates nitric oxide (NO) production and limits cellular toxicity in activated macrophages by mediating the ubiquitination and proteasomal degradation of NOS2. Acts as a bridge which links NOS2 with the ECS E3 ubiquitin ligase complex components ELOC and CUL5. The protein is SPRY domain-containing SOCS box protein 1 (SPSB1) of Homo sapiens (Human).